Here is a 335-residue protein sequence, read N- to C-terminus: N-acetyl-gamma-glutamyl-phosphate reductase (335 aa).

Cys-147 is a catalytic residue.

This sequence belongs to the NAGSA dehydrogenase family. Type 1 subfamily.

The protein resides in the cytoplasm. The catalysed reaction is N-acetyl-L-glutamate 5-semialdehyde + phosphate + NADP(+) = N-acetyl-L-glutamyl 5-phosphate + NADPH + H(+). Its pathway is amino-acid biosynthesis; L-arginine biosynthesis; N(2)-acetyl-L-ornithine from L-glutamate: step 3/4. Catalyzes the NADPH-dependent reduction of N-acetyl-5-glutamyl phosphate to yield N-acetyl-L-glutamate 5-semialdehyde. The chain is N-acetyl-gamma-glutamyl-phosphate reductase from Campylobacter hominis (strain ATCC BAA-381 / DSM 21671 / CCUG 45161 / LMG 19568 / NCTC 13146 / CH001A).